We begin with the raw amino-acid sequence, 139 residues long: Holo-[acyl-carrier-protein] synthase (139 aa).

2 residues coordinate Mg(2+): Asp8 and Glu61.

Belongs to the P-Pant transferase superfamily. AcpS family. Requires Mg(2+) as cofactor.

It localises to the cytoplasm. It carries out the reaction apo-[ACP] + CoA = holo-[ACP] + adenosine 3',5'-bisphosphate + H(+). Functionally, transfers the 4'-phosphopantetheine moiety from coenzyme A to a Ser of acyl-carrier-protein. The protein is Holo-[acyl-carrier-protein] synthase of Rhodopseudomonas palustris (strain BisA53).